The following is a 143-amino-acid chain: Deoxyuridine 5'-triphosphate nucleotidohydrolase (143 aa).

Substrate contacts are provided by residues arginine 63–glycine 65, asparagine 76, threonine 80–aspartate 82, and lysine 90.

The protein belongs to the dUTPase family. Requires Mg(2+) as cofactor.

The enzyme catalyses dUTP + H2O = dUMP + diphosphate + H(+). The protein operates within pyrimidine metabolism; dUMP biosynthesis; dUMP from dCTP (dUTP route): step 2/2. Its function is as follows. This enzyme is involved in nucleotide metabolism: it produces dUMP, the immediate precursor of thymidine nucleotides and it decreases the intracellular concentration of dUTP so that uracil cannot be incorporated into DNA. The sequence is that of Deoxyuridine 5'-triphosphate nucleotidohydrolase from Clostridioides difficile (Peptoclostridium difficile).